Consider the following 101-residue polypeptide: Interleukin-8 (101 aa).

The first 22 residues, 1–22, serve as a signal peptide directing secretion; the sequence is MTSKLAVALLAAFLLSAALCEA. Arg27 is modified (citrulline). 2 cysteine pairs are disulfide-bonded: Cys34-Cys61 and Cys36-Cys77.

The protein belongs to the intercrine alpha (chemokine CxC) family. In terms of assembly, homodimer. Interacts with TNFAIP6 (via Link domain); this interaction interferes with chemokine binding to glycosaminoglycans. Citrullination at Arg-27 prevents proteolysis, and dampens tissue inflammation, it also enhances leukocytosis, possibly through impaired chemokine clearance from the blood circulation.

It is found in the secreted. Chemotactic factor that mediates inflammatory response by attracting neutrophils, basophils, and T-cells to clear pathogens and protect the host from infection. Also plays an important role in neutrophil activation. Released in response to an inflammatory stimulus, exerts its effect by binding to the G-protein-coupled receptors CXCR1 and CXCR2, primarily found in neutrophils, monocytes and endothelial cells. G-protein heterotrimer (alpha, beta, gamma subunits) constitutively binds to CXCR1/CXCR2 receptor and activation by IL8 leads to beta and gamma subunits release from Galpha (GNAI2 in neutrophils) and activation of several downstream signaling pathways including PI3K and MAPK pathways. This chain is Interleukin-8 (CXCL8), found in Ovis aries (Sheep).